The chain runs to 500 residues: Glycerol kinase (500 aa).

Threonine 13 provides a ligand contact to ADP. Residues threonine 13, threonine 14, and serine 15 each contribute to the ATP site. Threonine 13 is a binding site for sn-glycerol 3-phosphate. An ADP-binding site is contributed by arginine 17. 3 residues coordinate sn-glycerol 3-phosphate: arginine 83, glutamate 84, and tyrosine 135. Glycerol is bound by residues arginine 83, glutamate 84, and tyrosine 135. Histidine 231 carries the phosphohistidine; by HPr modification. Residue aspartate 245 participates in sn-glycerol 3-phosphate binding. Residues aspartate 245 and glutamine 246 each contribute to the glycerol site. The ADP site is built by threonine 267 and glycine 310. Positions 267, 310, 314, and 411 each coordinate ATP. ADP is bound by residues glycine 411 and asparagine 415.

This sequence belongs to the FGGY kinase family. Homotetramer and homodimer (in equilibrium). In terms of processing, the phosphoenolpyruvate-dependent sugar phosphotransferase system (PTS), including enzyme I, and histidine-containing protein (HPr) are required for the phosphorylation, which leads to the activation of the enzyme.

It carries out the reaction glycerol + ATP = sn-glycerol 3-phosphate + ADP + H(+). It functions in the pathway polyol metabolism; glycerol degradation via glycerol kinase pathway; sn-glycerol 3-phosphate from glycerol: step 1/1. Its activity is regulated as follows. Activated by phosphorylation and inhibited by fructose 1,6-bisphosphate (FBP). Functionally, key enzyme in the regulation of glycerol uptake and metabolism. Catalyzes the phosphorylation of glycerol to yield sn-glycerol 3-phosphate. This is Glycerol kinase from Oceanobacillus iheyensis (strain DSM 14371 / CIP 107618 / JCM 11309 / KCTC 3954 / HTE831).